A 154-amino-acid polypeptide reads, in one-letter code: Ribosome maturation factor RimP (154 aa).

This sequence belongs to the RimP family.

The protein localises to the cytoplasm. In terms of biological role, required for maturation of 30S ribosomal subunits. This Carboxydothermus hydrogenoformans (strain ATCC BAA-161 / DSM 6008 / Z-2901) protein is Ribosome maturation factor RimP.